The following is a 38-amino-acid chain: Photosystem II reaction center protein L (38 aa).

A helical membrane pass occupies residues 17 to 37 (SLYWGLLCIFVLAILFSSYFF).

It belongs to the PsbL family. In terms of assembly, PSII is composed of 1 copy each of membrane proteins PsbA, PsbB, PsbC, PsbD, PsbE, PsbF, PsbH, PsbI, PsbJ, PsbK, PsbL, PsbM, PsbT, PsbX, PsbY, PsbZ, Psb30/Ycf12, at least 3 peripheral proteins of the oxygen-evolving complex and a large number of cofactors. It forms dimeric complexes.

The protein localises to the plastid. Its subcellular location is the chloroplast thylakoid membrane. One of the components of the core complex of photosystem II (PSII). PSII is a light-driven water:plastoquinone oxidoreductase that uses light energy to abstract electrons from H(2)O, generating O(2) and a proton gradient subsequently used for ATP formation. It consists of a core antenna complex that captures photons, and an electron transfer chain that converts photonic excitation into a charge separation. This subunit is found at the monomer-monomer interface and is required for correct PSII assembly and/or dimerization. This chain is Photosystem II reaction center protein L, found in Cyanidioschyzon merolae (strain NIES-3377 / 10D) (Unicellular red alga).